The following is a 179-amino-acid chain: CMT1A duplicated region transcript 4 protein homolog (179 aa).

Positions 1–15 are enriched in low complexity; sequence MISRPESSLSGLESS. Residues 1–20 are disordered; it reads MISRPESSLSGLESSQEVQK.

The polypeptide is CMT1A duplicated region transcript 4 protein homolog (Cdrt4) (Mus musculus (Mouse)).